The primary structure comprises 206 residues: Uridine kinase (206 aa).

11 to 18 contacts ATP; it reads GGTGSGKS.

The protein belongs to the uridine kinase family.

It is found in the cytoplasm. The enzyme catalyses uridine + ATP = UMP + ADP + H(+). The catalysed reaction is cytidine + ATP = CMP + ADP + H(+). It functions in the pathway pyrimidine metabolism; CTP biosynthesis via salvage pathway; CTP from cytidine: step 1/3. The protein operates within pyrimidine metabolism; UMP biosynthesis via salvage pathway; UMP from uridine: step 1/1. This Clostridium botulinum (strain Okra / Type B1) protein is Uridine kinase.